We begin with the raw amino-acid sequence, 529 residues long: Peptide chain release factor 3 (529 aa).

In terms of domain architecture, tr-type G spans alanine 11–methionine 280. Residues serine 20 to threonine 27, aspartate 88 to histidine 92, and asparagine 142 to aspartate 145 contribute to the GTP site.

The protein belongs to the TRAFAC class translation factor GTPase superfamily. Classic translation factor GTPase family. PrfC subfamily.

It is found in the cytoplasm. Functionally, increases the formation of ribosomal termination complexes and stimulates activities of RF-1 and RF-2. It binds guanine nucleotides and has strong preference for UGA stop codons. It may interact directly with the ribosome. The stimulation of RF-1 and RF-2 is significantly reduced by GTP and GDP, but not by GMP. The polypeptide is Peptide chain release factor 3 (Enterobacter sp. (strain 638)).